The primary structure comprises 184 residues: Probable RNA 2'-phosphotransferase (184 aa).

This sequence belongs to the KptA/TPT1 family.

Removes the 2'-phosphate from RNA via an intermediate in which the phosphate is ADP-ribosylated by NAD followed by a presumed transesterification to release the RNA and generate ADP-ribose 1''-2''-cyclic phosphate (APPR&gt;P). May function as an ADP-ribosylase. The polypeptide is Probable RNA 2'-phosphotransferase (Shigella boydii serotype 18 (strain CDC 3083-94 / BS512)).